We begin with the raw amino-acid sequence, 255 residues long: MANHKNLFFLCFLIGLGLCSARRALLSSSESEAEVAAYGVNSGLSAGLGVGIGGGPGGGSGYGGGSGEGGGAGGHGEGHIGGGGGGGHGGGAGGGGGGGPGGGYGGGSGEGGGAGYGGGEAGGHGGGGGGGAGGGGGGGGGAHGGGYGGGQGAGAGGGYGGGGAGGHGGGGGGGNGGGGGGGSGEGGAHGGGYGAGGGAGEGYGGGAGAGGHGGGGGGGGGSGGGGGGGGGYAAASGYGHGGGAGGGEGSGGYVP.

The N-terminal stretch at methionine 1–alanine 21 is a signal peptide. Positions glycine 63 to histidine 88 are disordered.

As to expression, expressed in emerging leaf primordia and young leaves.

The protein localises to the secreted. Involved in leaf vasculature patterning. This Arabidopsis thaliana (Mouse-ear cress) protein is Glycine-rich protein DOT1.